A 1147-amino-acid polypeptide reads, in one-letter code: MARYKPNQQNHTDPKQQVVLPTYKLDSNLVLLPGIIYNVTFSRFKAATLLSRFKSQVSNVSLITNLLNEYDFDSKQEEKDDVESKYMPPPISSDAVTGIKQFYQYEQQFKGKNDDSSKVEAEPQSEFDWLVLAINPNLEKIKEPQTSSDDEYENIVTIARVIGMVDDTSNIKLTLQALTRGIKHNKVKPTQTNEVLIDIDWNSNIDDVASKYDVLNSKVLKLFRSIDGFIVDYRQALTVAASLAKKGKQSKDLKQKGDLLTLNPLANSLYLHLAASKDFTKAYISLQKLFGTFNSSSNTKIDNKTFLRLIDLTCAIIPFPNHEKLKLLNKFNSIDRINEVNRMLESMIQVFYNLKKNNKIINHWFYNEATNIQRANVVASQLKSIRLILEGMTNKPDKDIKTNQSPPRQLVRRGNNNKPAKSPMSDDGNESNDEYDDDEDDDDDEDELKAITSFIKGKLPNISTLSSDTKRLIVKDFKRIKSSPPGNSDFHVIRNYLEIVADIPWDRYVTRFKSNKDIDLEFAKKQLDSDHYGLQHVKTRLIQYLVVLKLLGINAEKEFEKIESENSKKSKKNESSSGSMGKNDKQRSEKTFTRSDDSIVIANNDETSIAHETARNKNKKSKSLTTIEKSSLNKSLMVSKNNKSPIIMLVGPPGTGKTSLAKSIAKSLGRNFQRVSLGGIKDESEIRGHRRTYVGAMPGVIIQSLRKSRSMNPVILLDEIDKIIGGNNGVNKFNGDPSAALLEVLDPEQNTSFIDHYLGFPVDLSQVMFICTANEASNLSRPLLDRLEMIEVGAYDYDEKLVIGERYLLPRQIKRNGIPNADLIDVDKSVMQKVILDYTREAGVRNFERSLGRICRFKAVEYSQSLEKLSEYQPKVEIEDLPKYLGLPFANLSTELFESPIESAKCGVVNGLSYNSDGSGSVLVFESIGFNHEGKSGSSSLNMTGRLGDVLMESAKIGLTFIKSIIYKNLLNLSDRNLSENLIDKINNMEIHLHVPSGSIQKDGPSAGITVALSFLSLILEKPVPLDVAMTGEITLRGLVLPIGGIKEKILGAHLNGIKRVIVPRENRKDLIEEYCRSTNDFNQLNDLLLDNENKYNFKRCEPEKFWFDKYGITIHYAREFWDVIKAVWGDALLVKVEQARMVEYHL.

Residues 20–348 enclose the Lon N-terminal domain; the sequence is LPTYKLDSNL…EVNRMLESMI (329 aa). Disordered regions lie at residues 395 to 444 and 561 to 626; these read KPDK…DDDD and KIES…SLTT. Positions 427–444 are enriched in acidic residues; that stretch reads DGNESNDEYDDDEDDDDD. Composition is skewed to basic and acidic residues over residues 561–574 and 582–597; these read KIES…KKNE and KNDK…RSDD. Residue 651–658 participates in ATP binding; sequence GPPGTGKT. The Lon proteolytic domain occupies 903-1131; it reads SAKCGVVNGL…WDVIKAVWGD (229 aa). Active-site residues include Ser1006 and Lys1049.

The protein belongs to the peptidase S16 family.

The protein resides in the peroxisome matrix. The catalysed reaction is Hydrolysis of proteins in presence of ATP.. Its function is as follows. ATP-dependent serine protease that mediates the selective degradation of misfolded and unassembled polypeptides in the peroxisomal matrix. Necessary for type 2 peroxisome targeting signal (PTS2)-containing protein processing and facilitates peroxisome matrix protein import. This Debaryomyces hansenii (strain ATCC 36239 / CBS 767 / BCRC 21394 / JCM 1990 / NBRC 0083 / IGC 2968) (Yeast) protein is Lon protease homolog 2, peroxisomal.